A 455-amino-acid polypeptide reads, in one-letter code: Argininosuccinate lyase (455 aa).

The protein belongs to the lyase 1 family. Argininosuccinate lyase subfamily.

The protein resides in the cytoplasm. It catalyses the reaction 2-(N(omega)-L-arginino)succinate = fumarate + L-arginine. The protein operates within amino-acid biosynthesis; L-arginine biosynthesis; L-arginine from L-ornithine and carbamoyl phosphate: step 3/3. The chain is Argininosuccinate lyase from Shewanella baltica (strain OS195).